Here is a 327-residue protein sequence, read N- to C-terminus: Carboxylesterase 20 (327 aa).

Residues 87 to 89 carry the Involved in the stabilization of the negatively charged intermediate by the formation of the oxyanion hole motif; sequence HGG. The active-site Nucleophile is S166. Catalysis depends on residues D272 and H302.

The protein belongs to the 'GDXG' lipolytic enzyme family. In terms of tissue distribution, expressed in roots, stems, flowers and siliques.

It catalyses the reaction a carboxylic ester + H2O = an alcohol + a carboxylate + H(+). Its activity is regulated as follows. Esterase activity measured in vitro with the synthetic substrate p-nitrophenyl acetate (pNPA) is inhibited by strigolactone. Carboxylesterase that possesses esterase activity in vitro with the synthetic substrate p-nitrophenyl acetate (pNPA). Binds strigolactones, but is not able to hydrolyze them. May be involved in the regulation of shoot branching. This is Carboxylesterase 20 from Arabidopsis thaliana (Mouse-ear cress).